A 256-amino-acid polypeptide reads, in one-letter code: MTDASADALTSPSNSGASQDTSQQNAVVLLSGGLDSVTCLYWAKARYAKVTAVSFNYGQRHNSELVAAKSIAGQAGVNHKIIDIDIAQLGGSSLTDHDMTVPDGDADKFPTHTDDIDNQAIPNTYVPARNTIFLSYALAVAEVTDANHIVIGVSSVDYSGYPDCRPEYIEAFEVMANLATKAGVTGHKLHIQTPLQKLSKAQTIQLGNSLGVDYSQTISCYKADSEGRACGICDSCTLRKRGFSDAGLADPTRYAG.

The tract at residues 1–22 (MTDASADALTSPSNSGASQDTS) is disordered. Residues 8 to 22 (ALTSPSNSGASQDTS) show a composition bias toward polar residues. An ATP-binding site is contributed by 30 to 40 (LSGGLDSVTCL). Positions 220, 230, 233, and 236 each coordinate Zn(2+).

The protein belongs to the QueC family. Zn(2+) is required as a cofactor.

It carries out the reaction 7-carboxy-7-deazaguanine + NH4(+) + ATP = 7-cyano-7-deazaguanine + ADP + phosphate + H2O + H(+). It functions in the pathway purine metabolism; 7-cyano-7-deazaguanine biosynthesis. Its function is as follows. Catalyzes the ATP-dependent conversion of 7-carboxy-7-deazaguanine (CDG) to 7-cyano-7-deazaguanine (preQ(0)). The polypeptide is 7-cyano-7-deazaguanine synthase (Psychrobacter sp. (strain PRwf-1)).